Consider the following 948-residue polypeptide: Bifunctional glutamine synthetase adenylyltransferase/adenylyl-removing enzyme (948 aa).

Positions 1-445 (MAPPPDTSGS…IFTEVIAEPP (445 aa)) are adenylyl removase. Residues 451–948 (EPLLDGGEAE…WKQIIEAPVF (498 aa)) form an adenylyl transferase region.

Belongs to the GlnE family. Requires Mg(2+) as cofactor.

The enzyme catalyses [glutamine synthetase]-O(4)-(5'-adenylyl)-L-tyrosine + phosphate = [glutamine synthetase]-L-tyrosine + ADP. It catalyses the reaction [glutamine synthetase]-L-tyrosine + ATP = [glutamine synthetase]-O(4)-(5'-adenylyl)-L-tyrosine + diphosphate. Involved in the regulation of glutamine synthetase GlnA, a key enzyme in the process to assimilate ammonia. When cellular nitrogen levels are high, the C-terminal adenylyl transferase (AT) inactivates GlnA by covalent transfer of an adenylyl group from ATP to specific tyrosine residue of GlnA, thus reducing its activity. Conversely, when nitrogen levels are low, the N-terminal adenylyl removase (AR) activates GlnA by removing the adenylyl group by phosphorolysis, increasing its activity. The regulatory region of GlnE binds the signal transduction protein PII (GlnB) which indicates the nitrogen status of the cell. The polypeptide is Bifunctional glutamine synthetase adenylyltransferase/adenylyl-removing enzyme (Methylococcus capsulatus (strain ATCC 33009 / NCIMB 11132 / Bath)).